The chain runs to 479 residues: Aspartyl/glutamyl-tRNA(Asn/Gln) amidotransferase subunit B (479 aa).

The protein belongs to the GatB/GatE family. GatB subfamily. In terms of assembly, heterotrimer of A, B and C subunits.

It carries out the reaction L-glutamyl-tRNA(Gln) + L-glutamine + ATP + H2O = L-glutaminyl-tRNA(Gln) + L-glutamate + ADP + phosphate + H(+). The catalysed reaction is L-aspartyl-tRNA(Asn) + L-glutamine + ATP + H2O = L-asparaginyl-tRNA(Asn) + L-glutamate + ADP + phosphate + 2 H(+). In terms of biological role, allows the formation of correctly charged Asn-tRNA(Asn) or Gln-tRNA(Gln) through the transamidation of misacylated Asp-tRNA(Asn) or Glu-tRNA(Gln) in organisms which lack either or both of asparaginyl-tRNA or glutaminyl-tRNA synthetases. The reaction takes place in the presence of glutamine and ATP through an activated phospho-Asp-tRNA(Asn) or phospho-Glu-tRNA(Gln). The sequence is that of Aspartyl/glutamyl-tRNA(Asn/Gln) amidotransferase subunit B from Streptococcus pyogenes serotype M5 (strain Manfredo).